The primary structure comprises 764 residues: 5-methyltetrahydropteroyltriglutamate--homocysteine methyltransferase (764 aa).

5-methyltetrahydropteroyltri-L-glutamate-binding positions include 16–19 (RELK) and K121. L-homocysteine-binding positions include 440-442 (IGS) and E493. Residues 440-442 (IGS) and E493 each bind L-methionine. Residues 524-525 (RC) and W570 contribute to the 5-methyltetrahydropteroyltri-L-glutamate site. An L-homocysteine-binding site is contributed by D608. D608 contacts L-methionine. E614 serves as a coordination point for 5-methyltetrahydropteroyltri-L-glutamate. Positions 650, 652, and 674 each coordinate Zn(2+). Catalysis depends on H703, which acts as the Proton donor. Residue C735 coordinates Zn(2+).

The protein belongs to the vitamin-B12 independent methionine synthase family. Zn(2+) is required as a cofactor.

It catalyses the reaction 5-methyltetrahydropteroyltri-L-glutamate + L-homocysteine = tetrahydropteroyltri-L-glutamate + L-methionine. It functions in the pathway amino-acid biosynthesis; L-methionine biosynthesis via de novo pathway; L-methionine from L-homocysteine (MetE route): step 1/1. Catalyzes the transfer of a methyl group from 5-methyltetrahydrofolate to homocysteine resulting in methionine formation. The protein is 5-methyltetrahydropteroyltriglutamate--homocysteine methyltransferase of Burkholderia cenocepacia (strain ATCC BAA-245 / DSM 16553 / LMG 16656 / NCTC 13227 / J2315 / CF5610) (Burkholderia cepacia (strain J2315)).